A 697-amino-acid chain; its full sequence is Phenylalanine--tRNA ligase beta subunit, chloroplastic (697 aa).

The 86-residue stretch at 283-368 (NISRILFIDK…RIYGFDNFIS (86 aa)) folds into the B5 domain. 4 residues coordinate Mg(2+): aspartate 346, aspartate 352, glutamate 355, and glutamate 356. One can recognise an FDX-ACB domain in the interval 609–697 (SSYPSLTRDI…IDDLLNEYKL (89 aa)).

It belongs to the phenylalanyl-tRNA synthetase beta subunit family. Type 1 subfamily. As to quaternary structure, tetramer of two alpha and two beta subunits. The cofactor is Mg(2+).

Its subcellular location is the plastid. It is found in the chloroplast. The enzyme catalyses tRNA(Phe) + L-phenylalanine + ATP = L-phenylalanyl-tRNA(Phe) + AMP + diphosphate + H(+). The chain is Phenylalanine--tRNA ligase beta subunit, chloroplastic from Gracilaria tenuistipitata var. liui (Red alga).